Here is a 271-residue protein sequence, read N- to C-terminus: Protein FAM110D (271 aa).

Disordered stretches follow at residues 1 to 83 (MLLA…RPDS), 116 to 145 (PRDAAPSSPASTERPAASGGWAAPQDAPEA), and 186 to 245 (PQSW…PVSV). Residues 68–78 (RPVRRGSGRRL) show a composition bias toward basic residues. A compositionally biased stretch (low complexity) spans 116-126 (PRDAAPSSPAS). Over residues 220-231 (SPGGAGGGGGSE) the composition is skewed to gly residues.

It belongs to the FAM110 family.

The protein is Protein FAM110D (FAM110D) of Homo sapiens (Human).